A 44-amino-acid polypeptide reads, in one-letter code: Photosystem I reaction center subunit IX (44 aa).

Residues 7-27 (YLSVAPVLSTLWFGSLAGLLI) traverse the membrane as a helical segment.

It belongs to the PsaJ family.

Its subcellular location is the plastid. It localises to the chloroplast thylakoid membrane. Its function is as follows. May help in the organization of the PsaE and PsaF subunits. The sequence is that of Photosystem I reaction center subunit IX from Fagopyrum esculentum subsp. ancestrale (Wild buckwheat).